The sequence spans 208 residues: 7-carboxy-7-deazaguanine synthase (208 aa).

Substrate-binding positions include 23-25 and arginine 38; that span reads LQG. The 180-residue stretch at 29–208 folds into the Radical SAM core domain; that stretch reads WAGGNAFFIR…LQTHKYLGVR (180 aa). [4Fe-4S] cluster contacts are provided by cysteine 42, cysteine 46, and cysteine 49. Threonine 83 is a binding site for substrate. Residues glycine 85 and 126 to 128 each bind S-adenosyl-L-methionine; that span reads SPK.

It belongs to the radical SAM superfamily. 7-carboxy-7-deazaguanine synthase family. In terms of assembly, homodimer. [4Fe-4S] cluster is required as a cofactor. S-adenosyl-L-methionine serves as cofactor. The cofactor is Mg(2+).

The enzyme catalyses 6-carboxy-5,6,7,8-tetrahydropterin + H(+) = 7-carboxy-7-deazaguanine + NH4(+). The protein operates within purine metabolism; 7-cyano-7-deazaguanine biosynthesis. Its function is as follows. Catalyzes the complex heterocyclic radical-mediated conversion of 6-carboxy-5,6,7,8-tetrahydropterin (CPH4) to 7-carboxy-7-deazaguanine (CDG), a step common to the biosynthetic pathways of all 7-deazapurine-containing compounds. The sequence is that of 7-carboxy-7-deazaguanine synthase from Synechocystis sp. (strain ATCC 27184 / PCC 6803 / Kazusa).